A 344-amino-acid chain; its full sequence is Anthranilate phosphoribosyltransferase (344 aa).

5-phospho-alpha-D-ribose 1-diphosphate-binding positions include G81, 84 to 85, S89, 91 to 94, 109 to 117, and A121; these read GD, NIST, and KHGNRALSS. G81 serves as a coordination point for anthranilate. S93 lines the Mg(2+) pocket. N112 contributes to the anthranilate binding site. Anthranilate is bound at residue R167. Residues D226 and E227 each contribute to the Mg(2+) site.

It belongs to the anthranilate phosphoribosyltransferase family. In terms of assembly, homodimer. Mg(2+) serves as cofactor.

It carries out the reaction N-(5-phospho-beta-D-ribosyl)anthranilate + diphosphate = 5-phospho-alpha-D-ribose 1-diphosphate + anthranilate. The protein operates within amino-acid biosynthesis; L-tryptophan biosynthesis; L-tryptophan from chorismate: step 2/5. Its function is as follows. Catalyzes the transfer of the phosphoribosyl group of 5-phosphorylribose-1-pyrophosphate (PRPP) to anthranilate to yield N-(5'-phosphoribosyl)-anthranilate (PRA). The polypeptide is Anthranilate phosphoribosyltransferase (Xanthobacter autotrophicus (strain ATCC BAA-1158 / Py2)).